Consider the following 151-residue polypeptide: Glycosylation-dependent cell adhesion molecule 1 (151 aa).

An N-terminal signal peptide occupies residues 1–19 (MKFFTVLLFVSLAATSLAL). The tract at residues 29–123 (MKTQPTDAIP…ENLTKSSQTV (95 aa)) is disordered. The segment covering 42–52 (STPTSYTSEES) has biased composition (low complexity). The span at 53-71 (TSSKDLSKEPSIFREELIS) shows a compositional bias: basic and acidic residues. 4 positions are modified to phosphoserine: Ser-54, Ser-59, Ser-63, and Ser-71. Residues 103-114 (RPTTSAATTSEE) are compositionally biased toward low complexity. Asn-115 is a glycosylation site (N-linked (GlcNAc...) asparagine).

This sequence belongs to the PP3/GlyCAM-1 family. Post-translationally, extensively O-glycosylated. Lymph nodes. Associated with the lumenal surface of the high endothelial venules of peripheral lymph nodes.

The protein resides in the cell membrane. In terms of biological role, adhesion molecule that accomplishes cell binding by presenting carbohydrate(s) to the lectin domain of L-selectin. This Mus musculus (Mouse) protein is Glycosylation-dependent cell adhesion molecule 1 (Glycam1).